Reading from the N-terminus, the 405-residue chain is Tryptophan synthase beta chain (405 aa).

Lys-95 carries the post-translational modification N6-(pyridoxal phosphate)lysine.

Belongs to the TrpB family. As to quaternary structure, tetramer of two alpha and two beta chains. Pyridoxal 5'-phosphate serves as cofactor.

It carries out the reaction (1S,2R)-1-C-(indol-3-yl)glycerol 3-phosphate + L-serine = D-glyceraldehyde 3-phosphate + L-tryptophan + H2O. Its pathway is amino-acid biosynthesis; L-tryptophan biosynthesis; L-tryptophan from chorismate: step 5/5. In terms of biological role, the beta subunit is responsible for the synthesis of L-tryptophan from indole and L-serine. This is Tryptophan synthase beta chain from Pseudomonas putida (strain ATCC 47054 / DSM 6125 / CFBP 8728 / NCIMB 11950 / KT2440).